Consider the following 197-residue polypeptide: dITP/XTP pyrophosphatase (197 aa).

8–13 (TGNAGK) provides a ligand contact to substrate. Glu-40 and Asp-69 together coordinate Mg(2+). Catalysis depends on Asp-69, which acts as the Proton acceptor. Substrate-binding positions include Ser-70, 154-157 (FGYD), Lys-177, and 182-183 (HR).

The protein belongs to the HAM1 NTPase family. In terms of assembly, homodimer. Mg(2+) serves as cofactor.

It catalyses the reaction XTP + H2O = XMP + diphosphate + H(+). It carries out the reaction dITP + H2O = dIMP + diphosphate + H(+). The catalysed reaction is ITP + H2O = IMP + diphosphate + H(+). Functionally, pyrophosphatase that catalyzes the hydrolysis of nucleoside triphosphates to their monophosphate derivatives, with a high preference for the non-canonical purine nucleotides XTP (xanthosine triphosphate), dITP (deoxyinosine triphosphate) and ITP. Seems to function as a house-cleaning enzyme that removes non-canonical purine nucleotides from the nucleotide pool, thus preventing their incorporation into DNA/RNA and avoiding chromosomal lesions. This Escherichia coli O157:H7 protein is dITP/XTP pyrophosphatase (rdgB).